The following is a 277-amino-acid chain: Caspase-3 (277 aa).

M1 carries the N-acetylmethionine modification. 2 consecutive propeptides follow at residues 1–9 and 10–28; these read MENTENSVD and SKSI…KSVD. K11 carries the post-translational modification N6-acetyllysine. S26 is subject to Phosphoserine. Catalysis depends on residues H121 and C163. C163 carries the S-nitrosocysteine; in inhibited form modification.

This sequence belongs to the peptidase C14A family. Heterotetramer that consists of two anti-parallel arranged heterodimers, each one formed by a 17 kDa (p17) and a 12 kDa (p12) subunit. Interacts with BIRC6/bruce. In terms of processing, cleavage by granzyme B, caspase-6, caspase-8 and caspase-10 generates the two active subunits. Additional processing of the propeptides is likely due to the autocatalytic activity of the activated protease. Active heterodimers between the small subunit of caspase-7 protease and the large subunit of caspase-3 also occur and vice versa. S-nitrosylated on its catalytic site cysteine in unstimulated cell lines and denitrosylated upon activation of the Fas apoptotic pathway, associated with an increase in intracellular caspase activity. Fas therefore activates caspase-3 not only by inducing the cleavage of the caspase zymogen to its active subunits, but also by stimulating the denitrosylation of its active site thiol. Post-translationally, ubiquitinated by BIRC6; this activity is inhibited by DIABLO/SMAC.

The protein resides in the cytoplasm. It catalyses the reaction Strict requirement for an Asp residue at positions P1 and P4. It has a preferred cleavage sequence of Asp-Xaa-Xaa-Asp-|- with a hydrophobic amino-acid residue at P2 and a hydrophilic amino-acid residue at P3, although Val or Ala are also accepted at this position.. Inhibited by BIRC6; following inhibition of BIRC6-caspase binding by DIABLO/SMAC, BIRC6 is subjected to caspase cleavage, leading to an increase in active caspases. Its function is as follows. Involved in the activation cascade of caspases responsible for apoptosis execution. At the onset of apoptosis, it proteolytically cleaves poly(ADP-ribose) polymerase PARP1 at a '216-Asp-|-Gly-217' bond. Cleaves and activates sterol regulatory element binding proteins (SREBPs) between the basic helix-loop-helix leucine zipper domain and the membrane attachment domain. Cleaves and activates caspase-6, -7 and -9 (CASP6, CASP7 and CASP9, respectively). Cleaves and inactivates interleukin-18 (IL18). Triggers cell adhesion in sympathetic neurons through RET cleavage. Cleaves IL-1 beta between an Asp and an Ala, releasing the mature cytokine which is involved in a variety of inflammatory processes. Cleaves and inhibits serine/threonine-protein kinase AKT1 in response to oxidative stress. Acts as an inhibitor of type I interferon production during virus-induced apoptosis by mediating cleavage of antiviral proteins CGAS, IRF3 and MAVS, thereby preventing cytokine overproduction. Also involved in pyroptosis by mediating cleavage and activation of gasdermin-E (GSDME). Cleaves XRCC4 and phospholipid scramblase proteins XKR4, XKR8 and XKR9, leading to promote phosphatidylserine exposure on apoptotic cell surface. Cleaves BIRC6 following inhibition of BIRC6-caspase binding by DIABLO/SMAC. The protein is Caspase-3 (CASP3) of Macaca fascicularis (Crab-eating macaque).